Reading from the N-terminus, the 359-residue chain is Phosphoserine aminotransferase (359 aa).

Position 41 (Arg-41) interacts with L-glutamate. Residues 75-76 (AS), Trp-101, Thr-152, Asp-171, and Gln-194 contribute to the pyridoxal 5'-phosphate site. Lys-195 is modified (N6-(pyridoxal phosphate)lysine). 236–237 (NT) contributes to the pyridoxal 5'-phosphate binding site.

Belongs to the class-V pyridoxal-phosphate-dependent aminotransferase family. SerC subfamily. Homodimer. It depends on pyridoxal 5'-phosphate as a cofactor.

It localises to the cytoplasm. The catalysed reaction is O-phospho-L-serine + 2-oxoglutarate = 3-phosphooxypyruvate + L-glutamate. It catalyses the reaction 4-(phosphooxy)-L-threonine + 2-oxoglutarate = (R)-3-hydroxy-2-oxo-4-phosphooxybutanoate + L-glutamate. It participates in amino-acid biosynthesis; L-serine biosynthesis; L-serine from 3-phospho-D-glycerate: step 2/3. It functions in the pathway cofactor biosynthesis; pyridoxine 5'-phosphate biosynthesis; pyridoxine 5'-phosphate from D-erythrose 4-phosphate: step 3/5. Its function is as follows. Catalyzes the reversible conversion of 3-phosphohydroxypyruvate to phosphoserine and of 3-hydroxy-2-oxo-4-phosphonooxybutanoate to phosphohydroxythreonine. In Acinetobacter baumannii (strain ACICU), this protein is Phosphoserine aminotransferase.